The chain runs to 272 residues: Hematopoietically-expressed homeobox protein hhex (272 aa).

Residues Arg-137–Lys-196 constitute a DNA-binding region (homeobox). Residues Cys-222–His-272 are disordered. The span at Glu-250–Ile-261 shows a compositional bias: acidic residues.

In terms of tissue distribution, first expressed in the dorsal endomesoderm of the gastrula stage embryo. The dorsal endomesoderm contributes to forming the embryonic liver, and expression continues in the liver throughout development. Also expressed in precursors of the developing thyroid gland, and beginning at the tailbud stage, expressed in the ventral region of the head. Also transiently expressed in the endothelial layer of developing vascular tissues of the embryo, beginning at the tailbud stages.

The protein resides in the nucleus. Functionally, recognizes the DNA sequence 5'-ATTAA-3'. Transcriptional repressor. Regulates the differentiation of both endothelial and blood cells. Probably plays a role in the proliferation of vascular endothelial cells during blood vessel development. Establishes anterior identity at two levels; acts early to enhance canonical wnt-signaling by repressing expression of tle4, and acts later to inhibit nodal-signaling by directly targeting nodal/nr1 and nodal2/nr2. May play a role in liver development. Induces heart development. This is Hematopoietically-expressed homeobox protein hhex from Xenopus laevis (African clawed frog).